The following is a 305-amino-acid chain: Glycine--tRNA ligase alpha subunit (305 aa).

It belongs to the class-II aminoacyl-tRNA synthetase family. Tetramer of two alpha and two beta subunits.

It localises to the cytoplasm. It catalyses the reaction tRNA(Gly) + glycine + ATP = glycyl-tRNA(Gly) + AMP + diphosphate. This is Glycine--tRNA ligase alpha subunit from Vibrio vulnificus (strain CMCP6).